We begin with the raw amino-acid sequence, 357 residues long: IGF-like family receptor 1 (357 aa).

The signal sequence occupies residues 1–22 (MGPLRLLPTAVLLLAQAAPWEA). At 23 to 160 (SQHCGRLEYW…HKAPQQAWPS (138 aa)) the chain is on the extracellular side. A disordered region spans residues 100-147 (IPSGSRGGTGRPCREPVPNKEPCPLTPGKSSILSSQEPSSPGIPSVSW). Low complexity predominate over residues 129–139 (SSILSSQEPSS). The helical transmembrane segment at 161–181 (LSFALFLVLVLLVTSAIILLA) threads the bilayer. Residues 182 to 357 (LQRHHRRLDQ…KLGSSGACLA (176 aa)) are Cytoplasmic-facing.

It localises to the cell membrane. Its function is as follows. Probable cell membrane receptor for the IGF-like family protein IGFL. This is IGF-like family receptor 1 (IGFLR1) from Bos taurus (Bovine).